The chain runs to 500 residues: 7-alpha-hydroxycholest-4-en-3-one 12-alpha-hydroxylase (500 aa).

The chain crosses the membrane as a helical span at residues 2 to 21; it reads VLWGLLGALLMVMVGWLCLP. Ser-325 carries the phosphoserine modification. Residue Cys-439 coordinates heme.

This sequence belongs to the cytochrome P450 family. It depends on heme as a cofactor. In terms of tissue distribution, liver (at protein level).

It localises to the endoplasmic reticulum membrane. The protein localises to the microsome membrane. The enzyme catalyses 7alpha-hydroxycholest-4-en-3-one + reduced [NADPH--hemoprotein reductase] + O2 = 7alpha,12alpha-dihydroxycholest-4-en-3-one + oxidized [NADPH--hemoprotein reductase] + H2O + H(+). The catalysed reaction is 5beta-cholestane-3alpha,7alpha-diol + reduced [NADPH--hemoprotein reductase] + O2 = 5beta-cholestane-3alpha,7alpha,12alpha-triol + oxidized [NADPH--hemoprotein reductase] + H2O + H(+). It catalyses the reaction chenodeoxycholate + reduced [NADPH--hemoprotein reductase] + O2 = cholate + oxidized [NADPH--hemoprotein reductase] + H2O + H(+). It participates in lipid metabolism; bile acid biosynthesis. Its activity is regulated as follows. Up-regulated upon treatment with streptozotocin. Its function is as follows. A cytochrome P450 monooxygenase involved in primary bile acid biosynthesis. Catalyzes the 12alpha-hydroxylation of 7alpha-hydroxy-4-cholesten-3-one, an intermediate metabolite in cholic acid biosynthesis. Controls biliary balance of cholic acid and chenodeoxycholic acid, ultimately regulating the intestinal absorption of dietary lipids. Mechanistically, uses molecular oxygen inserting one oxygen atom into a substrate, and reducing the second into a water molecule, with two electrons provided by NADPH via cytochrome P450 reductase (CPR; NADPH--hemoprotein reductase). The protein is 7-alpha-hydroxycholest-4-en-3-one 12-alpha-hydroxylase (CYP8B1) of Oryctolagus cuniculus (Rabbit).